Here is a 337-residue protein sequence, read N- to C-terminus: Glyceraldehyde-3-phosphate dehydrogenase (337 aa).

NAD(+)-binding positions include 12 to 13, aspartate 34, and arginine 79; that span reads RI. D-glyceraldehyde 3-phosphate is bound by residues 150–152, threonine 181, 210–211, and arginine 233; these read SCT and TG. Catalysis depends on cysteine 151, which acts as the Nucleophile. Asparagine 315 is an NAD(+) binding site.

The protein belongs to the glyceraldehyde-3-phosphate dehydrogenase family. Homotetramer.

It is found in the cytoplasm. The catalysed reaction is D-glyceraldehyde 3-phosphate + phosphate + NAD(+) = (2R)-3-phospho-glyceroyl phosphate + NADH + H(+). It participates in carbohydrate degradation; glycolysis; pyruvate from D-glyceraldehyde 3-phosphate: step 1/5. The sequence is that of Glyceraldehyde-3-phosphate dehydrogenase (GPD) from Coccidioides posadasii (strain C735) (Valley fever fungus).